A 361-amino-acid polypeptide reads, in one-letter code: Histidinol-phosphate aminotransferase (361 aa).

Lysine 219 is subject to N6-(pyridoxal phosphate)lysine.

The protein belongs to the class-II pyridoxal-phosphate-dependent aminotransferase family. Histidinol-phosphate aminotransferase subfamily. Homodimer. Pyridoxal 5'-phosphate is required as a cofactor.

It carries out the reaction L-histidinol phosphate + 2-oxoglutarate = 3-(imidazol-4-yl)-2-oxopropyl phosphate + L-glutamate. The protein operates within amino-acid biosynthesis; L-histidine biosynthesis; L-histidine from 5-phospho-alpha-D-ribose 1-diphosphate: step 7/9. The polypeptide is Histidinol-phosphate aminotransferase (Acinetobacter baylyi (strain ATCC 33305 / BD413 / ADP1)).